A 617-amino-acid polypeptide reads, in one-letter code: Vacuolar protein sorting-associated protein 33B (617 aa).

N-acetylalanine is present on A2.

Belongs to the STXBP/unc-18/SEC1 family. As to quaternary structure, interacts with RAB11A and VIPAS39. Interacts with RAB25. Associates with adapter protein complex 3 (AP-3), clathrin:AP-3 and clathrin:HGS complexes. (Microbial infection) Interacts with M.tuberculosis PtpA. In terms of processing, phosphorylated on tyrosine residues. (Microbial infection) Dephosphorylated by M.tuberculosis PtpA, which induces the reduction of host phagolysosome fusion in M.tuberculosis-infected macrophages. As to expression, ubiquitous; highly expressed in testis and low expression in the lung.

It is found in the late endosome membrane. It localises to the lysosome membrane. The protein localises to the early endosome. Its subcellular location is the cytoplasmic vesicle. The protein resides in the clathrin-coated vesicle. It is found in the recycling endosome. In terms of biological role, may play a role in vesicle-mediated protein trafficking to lysosomal compartments and in membrane docking/fusion reactions of late endosomes/lysosomes. Required for proper trafficking and targeting of the collagen-modifying enzyme lysyl hydroxylase 3 (LH3) to intracellular collagen. Mediates phagolysosomal fusion in macrophages. Proposed to be involved in endosomal maturation implicating VIPAS39. In epithelial cells, the VPS33B:VIPAS39 complex may play a role in the apical recycling pathway and in the maintenance of the apical-basolateral polarity. Seems to be involved in the sorting of specific cargos from the trans-Golgi network to alpha-granule-destined multivesicular bodies (MVBs) promoting MVBs maturation in megakaryocytes. This chain is Vacuolar protein sorting-associated protein 33B (VPS33B), found in Homo sapiens (Human).